We begin with the raw amino-acid sequence, 375 residues long: E3 ubiquitin-protein ligase FANCL (375 aa).

Ala2 is subject to N-acetylalanine. The interval Leu104–Ala294 is UBC-RWD region (URD). 8 residues coordinate Zn(2+): Cys307, Cys310, Cys324, Cys329, His334, Cys337, Cys359, and Cys362. The segment at Cys307–Ser363 adopts an RING-type; degenerate zinc-finger fold.

Interacts with GGN. Belongs to the multisubunit FA complex composed of FANCA, FANCB, FANCC, FANCE, FANCF, FANCG, FANCL/PHF9 and FANCM. The complex is not found in FA patients. In complex with FANCF, FANCA and FANCG, but not with FANCC, nor FANCE, interacts with HES1; this interaction may be essential for the stability and nuclear localization of FA core complex proteins. Interacts with FANCI. Directly interacts (via the RING-type zinc finger) with UBE2T and UBE2W. In terms of processing, the RING-type zinc finger domain is monoubiquitinated in the presence of UBE2T and UBE2W.

It is found in the cytoplasm. Its subcellular location is the nucleus. The enzyme catalyses S-ubiquitinyl-[E2 ubiquitin-conjugating enzyme]-L-cysteine + [acceptor protein]-L-lysine = [E2 ubiquitin-conjugating enzyme]-L-cysteine + N(6)-ubiquitinyl-[acceptor protein]-L-lysine.. Its pathway is protein modification; protein ubiquitination. Functionally, ubiquitin ligase protein that mediates monoubiquitination of FANCD2 in the presence of UBE2T, a key step in the DNA damage pathway. Also mediates monoubiquitination of FANCI. May stimulate the ubiquitin release from UBE2W. May be required for proper primordial germ cell proliferation in the embryonic stage, whereas it is probably not needed for spermatogonial proliferation after birth. This Homo sapiens (Human) protein is E3 ubiquitin-protein ligase FANCL (FANCL).